Here is a 527-residue protein sequence, read N- to C-terminus: PTS system maltose-specific EIICB component (527 aa).

A PTS EIIC type-1 domain is found at 1 to 418 (MMQKIQRFGS…FNIATPGREK (418 aa)). 12 consecutive transmembrane segments (helical) span residues 8–28 (FGSA…IVGI), 59–79 (GWTV…VALA), 93–113 (VYLT…GAFG), 132–152 (IKTL…VVFL), 173–193 (YIVM…SYIW), 200–220 (IGSL…IYTF), 224–244 (ILIP…GPAV), 276–296 (FALH…AFYV), 305–325 (LVAG…ITEP), 326–346 (IEFT…VLAA), 357–377 (VVGN…IPLF), and 382–402 (MTYV…FFVF). A PTS EIIB type-1 domain is found at 449 to 527 (DDTAFLYIEA…RERVEKILNQ (79 aa)). The active-site Phosphocysteine intermediate; for EIIB activity is Cys-471.

It localises to the cell membrane. It carries out the reaction D-maltose(out) + N(pros)-phospho-L-histidyl-[protein] = alpha-maltose 6'-phosphate(in) + L-histidyl-[protein]. Its function is as follows. The phosphoenolpyruvate-dependent sugar phosphotransferase system (sugar PTS), a major carbohydrate active transport system, catalyzes the phosphorylation of incoming sugar substrates concomitantly with their translocation across the cell membrane. This system is involved in maltose transport. In Bacillus subtilis (strain 168), this protein is PTS system maltose-specific EIICB component.